Here is a 187-residue protein sequence, read N- to C-terminus: Adenine phosphoribosyltransferase (187 aa).

Belongs to the purine/pyrimidine phosphoribosyltransferase family. In terms of assembly, homodimer.

The protein localises to the cytoplasm. It catalyses the reaction AMP + diphosphate = 5-phospho-alpha-D-ribose 1-diphosphate + adenine. The protein operates within purine metabolism; AMP biosynthesis via salvage pathway; AMP from adenine: step 1/1. Catalyzes a salvage reaction resulting in the formation of AMP, that is energically less costly than de novo synthesis. The sequence is that of Adenine phosphoribosyltransferase from Yersinia pseudotuberculosis serotype I (strain IP32953).